Reading from the N-terminus, the 539-residue chain is MIO-dependent tyrosine 2,3-aminomutase (539 aa).

The active-site Proton donor/acceptor is Tyr-63. His-93 serves as a coordination point for substrate. The 5-imidazolinone (Ala-Gly) cross-link spans 152–154; the sequence is ASG. Ser-153 is subject to 2,3-didehydroalanine (Ser). The substrate site is built by Asn-205 and Arg-311.

This sequence belongs to the TAL/TAM family. As to quaternary structure, homotetramer; dimer of dimers. Post-translationally, contains an active site 4-methylidene-imidazol-5-one (MIO), which is formed autocatalytically by cyclization and dehydration of residues Ala-Ser-Gly.

The catalysed reaction is L-tyrosine = 3-amino-3-(4-hydroxyphenyl)propanoate. It catalyses the reaction L-tyrosine = (E)-4-coumarate + NH4(+). In terms of biological role, involved in the biosynthesis of the enediyne antitumor antibiotic C-1027. Catalyzes the MIO-dependent deamination of L-tyrosine generating the corresponding alpha,beta-unsaturated acid, (S)-beta-tyrosine. The protein is MIO-dependent tyrosine 2,3-aminomutase of Streptomyces globisporus.